The primary structure comprises 220 residues: Deoxyribose-phosphate aldolase (220 aa).

Asp-89 (proton donor/acceptor) is an active-site residue. The active-site Schiff-base intermediate with acetaldehyde is Lys-151. The Proton donor/acceptor role is filled by Lys-180.

Belongs to the DeoC/FbaB aldolase family. DeoC type 1 subfamily.

The protein resides in the cytoplasm. It catalyses the reaction 2-deoxy-D-ribose 5-phosphate = D-glyceraldehyde 3-phosphate + acetaldehyde. Its pathway is carbohydrate degradation; 2-deoxy-D-ribose 1-phosphate degradation; D-glyceraldehyde 3-phosphate and acetaldehyde from 2-deoxy-alpha-D-ribose 1-phosphate: step 2/2. Its function is as follows. Catalyzes a reversible aldol reaction between acetaldehyde and D-glyceraldehyde 3-phosphate to generate 2-deoxy-D-ribose 5-phosphate. The sequence is that of Deoxyribose-phosphate aldolase from Streptococcus suis (strain 05ZYH33).